Consider the following 62-residue polypeptide: Large ribosomal subunit protein eL24 (62 aa).

Zn(2+) contacts are provided by Cys7, Cys10, Cys33, and Cys37. A C4-type zinc finger spans residues 7–37; sequence CDYCGDDIEPGTGTMFVHNDGSTVHFCSAKC.

This sequence belongs to the eukaryotic ribosomal protein eL24 family. As to quaternary structure, part of the 50S ribosomal subunit. Forms a cluster with proteins L3 and L14. The cofactor is Zn(2+).

Its function is as follows. Binds to the 23S rRNA. The chain is Large ribosomal subunit protein eL24 from Halobacterium salinarum (strain ATCC 29341 / DSM 671 / R1).